Consider the following 669-residue polypeptide: MKSSLAVLSTARSDTTTTYIGRNQMIAPMAFQAKRSTFLCPLLVALAILFSLTAVSSGTSWAKDHAGSSQATVSAVAGDNQAVTAKGEVKNSFAPIKTCFNFLKEQPFVFILLALAIGYPLGKISLWGISLGPTAGTLLVGVLISIIGQNIFGIIYGIPSIVSTIFLLMFMYALGLKVGPQFFSGLKTGGLAFIVIGLIVWSLNWLICFFGVKLAGLEAGFAPGIISGSYTITAIIGVAQTALTNGAYTPPPGVSTEQIGANIAAGYAISYVLSNIGIILLIRYLPQIFGHDPIADAQLAEKELSGGATDPVPGAAGSLSLGFSHFDLRAYEVDHQEIIGKTVQEFFHLYPEAPILRVVRQGKLLNLSENNPIKRGDIVSVRADVHELIADGKKLIGKESDSILARDVPIEVADIHIGSRDVAGDTLAELGRSIGFGLQLKALFRFGQELPLLAGTAVQVGDVLRFVGPDFCIQQAAKRLGGRPILNSSITEVMYMAIAMGIGYIFGSLSFNFAGIPFALGTSAGCLLAGIFMSYWRSRNPEFGGPMSEGARSFLQDIGLNLFVAVLAAAVGPKIIESFHGTTAIWVAIIGILGALVPPLVAFVVGIKVFKLNSVVAAGASTGARNSTPGLNAICEQSQSAVAAVPYPLTYALTTVLALVGGYFAMLLS.

The next 6 membrane-spanning stretches (helical) occupy residues 39 to 61, 124 to 146, 153 to 175, 190 to 212, 221 to 243, and 263 to 285; these read LCPL…GTSW, ISLW…LISI, GIIY…YALG, GLAF…FFGV, FAPG…QTAL, and IAAG…IRYL. 2 RCK C-terminal domains span residues 316-397 and 398-483; these read AGSL…KLIG and KESD…LGGR. 5 helical membrane passes run 484 to 506, 516 to 538, 558 to 580, 585 to 607, and 645 to 667; these read PILN…GYIF, IPFA…YWRS, IGLN…ESFH, IWVA…VVGI, and VPYP…FAML.

Belongs to the AAE transporter (TC 2.A.81) family.

It is found in the cell membrane. This is an uncharacterized protein from Desulfotalea psychrophila (strain LSv54 / DSM 12343).